Consider the following 93-residue polypeptide: Probable endoribonuclease MazF1 (93 aa).

Belongs to the PemK/MazF family. In terms of assembly, forms a complex with cognate antitoxin MazE1.

Functionally, toxic component of a type II toxin-antitoxin (TA) system, its cognate antitoxin is MazE1. Probably an endoribonuclease. This is Probable endoribonuclease MazF1 (mazF1) from Mycobacterium tuberculosis (strain ATCC 25618 / H37Rv).